The primary structure comprises 314 residues: 4-hydroxy-3-methylbut-2-enyl diphosphate reductase (314 aa).

Residue cysteine 12 coordinates [4Fe-4S] cluster. Histidine 41 and histidine 74 together coordinate (2E)-4-hydroxy-3-methylbut-2-enyl diphosphate. Positions 41 and 74 each coordinate dimethylallyl diphosphate. Isopentenyl diphosphate is bound by residues histidine 41 and histidine 74. [4Fe-4S] cluster is bound at residue cysteine 96. A (2E)-4-hydroxy-3-methylbut-2-enyl diphosphate-binding site is contributed by histidine 124. Histidine 124 serves as a coordination point for dimethylallyl diphosphate. Histidine 124 contacts isopentenyl diphosphate. Glutamate 126 (proton donor) is an active-site residue. Threonine 168 contributes to the (2E)-4-hydroxy-3-methylbut-2-enyl diphosphate binding site. Cysteine 198 contributes to the [4Fe-4S] cluster binding site. Positions 226, 227, 228, and 270 each coordinate (2E)-4-hydroxy-3-methylbut-2-enyl diphosphate. Dimethylallyl diphosphate is bound by residues serine 226, serine 227, asparagine 228, and serine 270. Serine 226, serine 227, asparagine 228, and serine 270 together coordinate isopentenyl diphosphate.

This sequence belongs to the IspH family. [4Fe-4S] cluster is required as a cofactor.

It carries out the reaction isopentenyl diphosphate + 2 oxidized [2Fe-2S]-[ferredoxin] + H2O = (2E)-4-hydroxy-3-methylbut-2-enyl diphosphate + 2 reduced [2Fe-2S]-[ferredoxin] + 2 H(+). It catalyses the reaction dimethylallyl diphosphate + 2 oxidized [2Fe-2S]-[ferredoxin] + H2O = (2E)-4-hydroxy-3-methylbut-2-enyl diphosphate + 2 reduced [2Fe-2S]-[ferredoxin] + 2 H(+). It participates in isoprenoid biosynthesis; dimethylallyl diphosphate biosynthesis; dimethylallyl diphosphate from (2E)-4-hydroxy-3-methylbutenyl diphosphate: step 1/1. It functions in the pathway isoprenoid biosynthesis; isopentenyl diphosphate biosynthesis via DXP pathway; isopentenyl diphosphate from 1-deoxy-D-xylulose 5-phosphate: step 6/6. Functionally, catalyzes the conversion of 1-hydroxy-2-methyl-2-(E)-butenyl 4-diphosphate (HMBPP) into a mixture of isopentenyl diphosphate (IPP) and dimethylallyl diphosphate (DMAPP). Acts in the terminal step of the DOXP/MEP pathway for isoprenoid precursor biosynthesis. This is 4-hydroxy-3-methylbut-2-enyl diphosphate reductase from Pseudomonas fluorescens (strain Pf0-1).